Here is a 1179-residue protein sequence, read N- to C-terminus: Integrin alpha-7 (1179 aa).

The signal sequence occupies residues 1 to 33 (MARIPRCDFLRPPGIYYLITSLLAGLFLPPAIA). Residues 34–1076 (FNLDVMGAIR…YLDPMAVVVE (1043 aa)) lie on the Extracellular side of the membrane. 7 FG-GAP repeats span residues 38–103 (VMGA…ETDC), 110–175 (RGAN…IRDE), 185–238 (EGRP…SPDL), 292–349 (DRLT…ATRL), 350–411 (IPEV…HWAD), 412–467 (ISPL…GVVV), and 471–530 (QVLE…IDPR). The N-linked (GlcNAc...) asparagine glycan is linked to Asn-86. 3 disulfide bridges follow: Cys-94–Cys-103, Cys-140–Cys-163, and Cys-184–Cys-197. Residues Asp-372, Asn-374, Asp-376, Asp-380, Asp-434, Asn-436, Asp-438, Asp-442, Asp-492, Asp-494, Asn-496, Tyr-498, and Asp-500 each contribute to the Ca(2+) site. Intrachain disulfides connect Cys-539–Cys-546, Cys-552–Cys-615, Cys-681–Cys-687, Cys-781–Cys-792, Cys-939–Cys-993, and Cys-999–Cys-1004. The N-linked (GlcNAc...) asparagine glycan is linked to Asn-784. Residues 952 to 961 (SRDRRRRELG) are compositionally biased toward basic and acidic residues. Residues 952 to 978 (SRDRRRRELGQPEPQEPPEKVEPSTSW) are disordered. Asn-988 carries an N-linked (GlcNAc...) asparagine glycan. Residues Asn-1023 and Asn-1043 are each glycosylated (N-linked (GlcNAc...) asparagine). The chain crosses the membrane as a helical span at residues 1077 to 1102 (GVPWWVILLGVLAGLLVLALLVLLLW). Residues 1103–1179 (KLGFFKRAKH…PDGHPVPATA (77 aa)) lie on the Cytoplasmic side of the membrane. Positions 1105–1109 (GFFKR) match the GFFKR motif motif. The disordered stretch occupies residues 1134-1153 (KEEKTGTIQRSNWGNSQWEG). The segment covering 1139-1152 (GTIQRSNWGNSQWE) has biased composition (polar residues). A run of 3 repeats spans residues 1155-1158 (DAHP), 1163-1166 (DWHP), and 1171-1174 (DGHP). The interval 1155 to 1174 (DAHPILAADWHPELGPDGHP) is 3 X 4 AA repeats of D-X-H-P.

This sequence belongs to the integrin alpha chain family. Heterodimer of an alpha and a beta subunit. The alpha subunit is composed of a heavy and a light chain linked by a disulfide bond. Alpha-7 associates with beta-1. Interacts with COMP. Interacts (via C-terminus intracellular tail region) with CIB1; the interaction is stabilized/increased in a calcium- and magnesium-dependent manner. In terms of processing, ADP-ribosylated on at least two sites of the extracellular domain in skeletal myotubes (in vitro). Post-translationally, no proteolytic cleavage to produce the 70 kDa form is seen due to the presence of a Gly instead of an arginine residue at position 647. In terms of tissue distribution, isoforms containing segment X2 are found in adult heart, lung and skeletal muscle. Isoforms containing segment X1 are expressed in adult heart, lung and in proliferating skeletal myoblasts but not in adult skeletal muscle. Isoforms containing segment a are exclusively found in skeletal muscle. Isoforms containing segment B are widely expressed. In muscle fibers isoforms containing segment A and B are expressed at myotendinous and neuromuscular junctions; isoforms containing segment C are expressed at neuromuscular junctions and at extrasynaptic sites.

It localises to the membrane. In terms of biological role, integrin alpha-7/beta-1 is the primary laminin receptor on skeletal myoblasts and adult myofibers. During myogenic differentiation, it may induce changes in the shape and mobility of myoblasts, and facilitate their localization at laminin-rich sites of secondary fiber formation. Involved in the maintenance of the myofibers cytoarchitecture as well as for their anchorage, viability and functional integrity. Mice carrying a ITGA7 null allele are viable and fertile, but show progressive muscular dystrophy starting soon after birth, but with a distinct variability in different muscle types. Required to promote contractile phenotype acquisition in differentiated airway smooth muscle (ASM) cells. Acts as a Schwann cell receptor for laminin-2. Acts as a receptor of COMP and mediates its effect on vascular smooth muscle cells (VSMCs) maturation. This Mus musculus (Mouse) protein is Integrin alpha-7 (Itga7).